Here is a 196-residue protein sequence, read N- to C-terminus: MAPVVQQPAPSFKKTAVVDGVFEEVTLEQYKGKWVLLAFIPLAFTFVCPSEIIAYSEAVKKFAEKDAQVLFASTDSEYTWLAWTNVARKDGGIGKVDFPVLADTNHSLSRDYGVLIEEEGVALRGIFLIDPKGVLRQITINDLPVGRSVEESLRLLEAFQFTEKYGEVCPANWHPGDETIKPSPEASKEYFNKVNK.

Residues 3 to 161 form the Thioredoxin domain; it reads PVVQQPAPSF…SLRLLEAFQF (159 aa). Position 45–47 (45–47) interacts with substrate; it reads TFV. Cysteine 48 serves as the catalytic Cysteine sulfenic acid (-SOH) intermediate. Arginine 124 contacts substrate. A disordered region spans residues 173–196; that stretch reads WHPGDETIKPSPEASKEYFNKVNK. Residues 175 to 196 show a composition bias toward basic and acidic residues; sequence PGDETIKPSPEASKEYFNKVNK.

Belongs to the peroxiredoxin family. AhpC/Prx1 subfamily. As to quaternary structure, homodimer; disulfide-linked, upon oxidation.

The protein resides in the cell surface. The protein localises to the nucleus. Its subcellular location is the cytoplasm. It catalyses the reaction a hydroperoxide + [thioredoxin]-dithiol = an alcohol + [thioredoxin]-disulfide + H2O. In terms of biological role, thiol-specific peroxidase that catalyzes the reduction of hydrogen peroxide and organic hydroperoxides to water and alcohols, respectively. Plays a role in cell protection against oxidative stress by detoxifying peroxides and as sensor of hydrogen peroxide-mediated signaling events. Also involved in the correct composition of the hyphal cell wall. In Candida albicans (strain SC5314 / ATCC MYA-2876) (Yeast), this protein is Peroxiredoxin TSA1-B.